The chain runs to 239 residues: Ribose-5-phosphate isomerase A (239 aa).

Substrate contacts are provided by residues 31-34, 88-91, and 101-104; these read FGST, DGAD, and KGGG. Residue glutamate 110 is the Proton acceptor of the active site. Substrate is bound at residue lysine 128.

It belongs to the ribose 5-phosphate isomerase family. In terms of assembly, homodimer.

The catalysed reaction is aldehydo-D-ribose 5-phosphate = D-ribulose 5-phosphate. It participates in carbohydrate degradation; pentose phosphate pathway; D-ribose 5-phosphate from D-ribulose 5-phosphate (non-oxidative stage): step 1/1. In terms of biological role, catalyzes the reversible conversion of ribose-5-phosphate to ribulose 5-phosphate. This chain is Ribose-5-phosphate isomerase A, found in Chloroflexus aurantiacus (strain ATCC 29366 / DSM 635 / J-10-fl).